A 159-amino-acid chain; its full sequence is Ribosomal RNA large subunit methyltransferase H (159 aa).

S-adenosyl-L-methionine-binding positions include L76, G108, and 127–132 (FGLLTL).

This sequence belongs to the RNA methyltransferase RlmH family. In terms of assembly, homodimer.

It is found in the cytoplasm. The enzyme catalyses pseudouridine(1915) in 23S rRNA + S-adenosyl-L-methionine = N(3)-methylpseudouridine(1915) in 23S rRNA + S-adenosyl-L-homocysteine + H(+). Specifically methylates the pseudouridine at position 1915 (m3Psi1915) in 23S rRNA. The protein is Ribosomal RNA large subunit methyltransferase H of Streptococcus pyogenes serotype M12 (strain MGAS2096).